The following is a 238-amino-acid chain: Riboflavin-binding protein (238 aa).

The N-terminal stretch at 1–17 is a signal peptide; that stretch reads MLRFAITLFAVITSSTC. At Q18 the chain carries Pyrrolidone carboxylic acid. 9 cysteine pairs are disulfide-bonded: C22–C49, C41–C90, C50–C94, C74–C155, C81–C127, C116–C186, C120–C169, C133–C151, and C184–C219. Residue N53 is glycosylated (N-linked (GlcNAc...) asparagine). N-linked (GlcNAc...) asparagine glycosylation is present at N164. Phosphoserine occurs at positions 204, 205, 208, 209, 210, 212, 213, and 214.

Belongs to the folate receptor family. Post-translationally, plasma and yolk RBPS have the same carbohydrate components, whereas egg-white RBP has a different, ovomucoid-type carbohydrate chain. In terms of processing, plasma RBP has the same C-terminal sequence as the egg-white RBP, which suggests that the C-terminal residues are cleaved off upon incorporation into the oocyte. As to expression, yolk RBP is synthesized in the liver; egg-white RBP is synthesized in the oviduct.

In terms of biological role, required for the transport of riboflavin to the developing oocyte. The polypeptide is Riboflavin-binding protein (Gallus gallus (Chicken)).